Consider the following 294-residue polypeptide: Probable metallo-hydrolase BURPS1710b_2304 (294 aa).

Residues His-68, His-70, Asp-72, His-73, His-143, Asp-170, and His-212 each coordinate a divalent metal cation.

This sequence belongs to the metallo-beta-lactamase superfamily. It depends on a divalent metal cation as a cofactor.

Probable hydrolase. Does not have beta-lactamase activity. This is Probable metallo-hydrolase BURPS1710b_2304 from Burkholderia pseudomallei (strain 1710b).